A 240-amino-acid chain; its full sequence is Splicing factor U2AF 35 kDa subunit (240 aa).

An N-acetylalanine modification is found at alanine 2. The C3H1-type 1 zinc finger occupies 12–40 (EKDKVNCSFYFKIGACRHGDRCSRLHNKP). Lysine 39 is subject to N6-methyllysine. Phosphoserine is present on residues serine 61 and serine 145. The 83-residue stretch at 65–147 (LRCAVSDVEM…QPIHAELSPV (83 aa)) folds into the RRM domain. The segment at 149–176 (DFREACCRQYEMGECTRGGFCNFMHLKP) adopts a C3H1-type 2 zinc-finger fold. Position 165 is an omega-N-methylarginine (arginine 165). Residues 183 to 240 (RELYGRRRKKHRSRSRSRERRSRSRDRGRGGGGGGGGGGGGRERDRRRSRDRERSGRF) are disordered. Positions 188–208 (RRRKKHRSRSRSRERRSRSRD) are enriched in basic residues. A compositionally biased stretch (gly residues) spans 212-222 (GGGGGGGGGGG). Residues 223 to 240 (GRERDRRRSRDRERSGRF) show a composition bias toward basic and acidic residues.

The protein belongs to the splicing factor SR family. In terms of assembly, identified in the spliceosome C complex. Heterodimer with U2AF2. Interacts (via RS domain) with PHF5A (via N-terminus). Interacts with ZRANB2. Interacts with SDE2. Interacts with SF3B1.

The protein resides in the nucleus. It is found in the nucleus speckle. Its function is as follows. Plays a critical role in both constitutive and enhancer-dependent splicing by mediating protein-protein interactions and protein-RNA interactions required for accurate 3'-splice site selection. Recruits U2 snRNP to the branch point. Directly mediates interactions between U2AF2 and proteins bound to the enhancers and thus may function as a bridge between U2AF2 and the enhancer complex to recruit it to the adjacent intron. The protein is Splicing factor U2AF 35 kDa subunit (U2AF1) of Homo sapiens (Human).